Here is a 120-residue protein sequence, read N- to C-terminus: uncharacterized protein (120 aa).

4 helical membrane-spanning segments follow: residues 9 to 29, 32 to 52, 68 to 88, and 94 to 114; these read WPDF…LFCG, ALMF…ADCL, FVWP…VMAT, and GPEH…SFRF.

The protein localises to the membrane. This is an uncharacterized protein from Escherichia phage Mu (Bacteriophage Mu).